The chain runs to 210 residues: Redox-sensing transcriptional repressor Rex (210 aa).

The segment at residues 17–56 (KYHRYLYELLKNDVDRISSKELSEKIGFTASQIRQDLNCF) is a DNA-binding region (H-T-H motif). 91–96 (GAGNIG) contacts NAD(+).

The protein belongs to the transcriptional regulatory Rex family. Homodimer.

It localises to the cytoplasm. Modulates transcription in response to changes in cellular NADH/NAD(+) redox state. In Clostridium botulinum (strain Loch Maree / Type A3), this protein is Redox-sensing transcriptional repressor Rex.